The chain runs to 51 residues: Small ribosomal subunit protein uS14 (51 aa).

Zn(2+)-binding residues include Cys-16, Cys-19, Cys-34, and Cys-37.

It belongs to the universal ribosomal protein uS14 family. Zinc-binding uS14 subfamily. Part of the 30S ribosomal subunit. Zn(2+) serves as cofactor.

In terms of biological role, binds 16S rRNA, required for the assembly of 30S particles. The protein is Small ribosomal subunit protein uS14 of Archaeoglobus fulgidus (strain ATCC 49558 / DSM 4304 / JCM 9628 / NBRC 100126 / VC-16).